The primary structure comprises 341 residues: Anthranilate phosphoribosyltransferase (341 aa).

5-phospho-alpha-D-ribose 1-diphosphate-binding positions include Gly80, 83 to 84, Thr88, 90 to 93, 108 to 116, and Ser120; these read GD, NIST, and KHGNRAVSS. Gly80 lines the anthranilate pocket. Ser92 is a binding site for Mg(2+). Residue Asn111 participates in anthranilate binding. Residue Arg166 participates in anthranilate binding. Mg(2+) is bound by residues Asp225 and Glu226.

It belongs to the anthranilate phosphoribosyltransferase family. As to quaternary structure, homodimer. The cofactor is Mg(2+).

The catalysed reaction is N-(5-phospho-beta-D-ribosyl)anthranilate + diphosphate = 5-phospho-alpha-D-ribose 1-diphosphate + anthranilate. The protein operates within amino-acid biosynthesis; L-tryptophan biosynthesis; L-tryptophan from chorismate: step 2/5. In terms of biological role, catalyzes the transfer of the phosphoribosyl group of 5-phosphorylribose-1-pyrophosphate (PRPP) to anthranilate to yield N-(5'-phosphoribosyl)-anthranilate (PRA). This Brevibacillus brevis (strain 47 / JCM 6285 / NBRC 100599) protein is Anthranilate phosphoribosyltransferase.